Reading from the N-terminus, the 313-residue chain is tRNA dimethylallyltransferase (313 aa).

Residue 11 to 18 (GPTAGGKT) coordinates ATP. Position 13–18 (13–18 (TAGGKT)) interacts with substrate. 3 interaction with substrate tRNA regions span residues 36–39 (DSAL), 160–164 (QRIGR), and 243–248 (RCVGYR).

Belongs to the IPP transferase family. Monomer. Requires Mg(2+) as cofactor.

The enzyme catalyses adenosine(37) in tRNA + dimethylallyl diphosphate = N(6)-dimethylallyladenosine(37) in tRNA + diphosphate. Its function is as follows. Catalyzes the transfer of a dimethylallyl group onto the adenine at position 37 in tRNAs that read codons beginning with uridine, leading to the formation of N6-(dimethylallyl)adenosine (i(6)A). This Neisseria meningitidis serogroup B (strain ATCC BAA-335 / MC58) protein is tRNA dimethylallyltransferase.